An 810-amino-acid polypeptide reads, in one-letter code: Transducer protein CosT (810 aa).

The Cytoplasmic portion of the chain corresponds to Met-1 to Lys-38. Residues Phe-39 to Ala-59 traverse the membrane as a helical segment. At Asp-60–Thr-323 the chain is on the extracellular side. A helical transmembrane segment spans residues Gly-324–Gly-344. The HAMP 1 domain occupies Arg-345 to Asp-397. At Arg-345 to Asp-810 the chain is on the cytoplasmic side. Positions Arg-403 to Ala-427 are disordered. Residues Glu-414–Ala-427 show a composition bias toward basic and acidic residues. One can recognise an HAMP 2 domain in the interval Ala-439–Ile-493. Positions Gly-512–Ala-748 constitute a Methyl-accepting transducer domain. 2 positions are modified to glutamate methyl ester (Glu): Glu-556 and Glu-739. The disordered stretch occupies residues Ser-751–Gly-784. Low complexity predominate over residues Ala-755–Glu-774. A compositionally biased stretch (polar residues) spans Ile-775–Gly-784.

Belongs to the methyl-accepting chemotaxis (MCP) protein family. Methylated by CheR.

The protein resides in the cell membrane. Its function is as follows. Mediates chemotaxis towards compatible osmolytes. Probably transduces the signal from the substrate-binding protein CosB to the histidine kinase CheA. The protein is Transducer protein CosT (cosT) of Halobacterium salinarum (strain ATCC 700922 / JCM 11081 / NRC-1) (Halobacterium halobium).